The chain runs to 175 residues: uncharacterized protein (175 aa).

To yeast YER187w.

This is an uncharacterized protein from Saccharomyces cerevisiae (strain ATCC 204508 / S288c) (Baker's yeast).